A 122-amino-acid chain; its full sequence is Small ribosomal subunit protein uS13 (122 aa).

The interval 94-122 (LSLPVRGQRTKTNSRTRKGKRKTVAGKKK) is disordered. The segment covering 101-122 (QRTKTNSRTRKGKRKTVAGKKK) has biased composition (basic residues).

This sequence belongs to the universal ribosomal protein uS13 family. As to quaternary structure, part of the 30S ribosomal subunit. Forms a loose heterodimer with protein S19. Forms two bridges to the 50S subunit in the 70S ribosome.

In terms of biological role, located at the top of the head of the 30S subunit, it contacts several helices of the 16S rRNA. In the 70S ribosome it contacts the 23S rRNA (bridge B1a) and protein L5 of the 50S subunit (bridge B1b), connecting the 2 subunits; these bridges are implicated in subunit movement. Contacts the tRNAs in the A and P-sites. In Chlamydia trachomatis serovar A (strain ATCC VR-571B / DSM 19440 / HAR-13), this protein is Small ribosomal subunit protein uS13.